The following is a 456-amino-acid chain: Bifunctional protein GlmU (456 aa).

Positions 1–229 (MLNNAMSVVI…LSEVEGVNNR (229 aa)) are pyrophosphorylase. UDP-N-acetyl-alpha-D-glucosamine contacts are provided by residues 11 to 14 (LAAG), K25, Q76, 81 to 82 (GT), 103 to 105 (YGD), G140, E154, N169, and N227. D105 is a binding site for Mg(2+). A Mg(2+)-binding site is contributed by N227. The tract at residues 230 to 250 (LQLSRLERVYQSEQAEKLLLA) is linker. The interval 251–456 (GVMLRDPARF…EGWRRPVKKK (206 aa)) is N-acetyltransferase. Residues R333 and K351 each coordinate UDP-N-acetyl-alpha-D-glucosamine. Catalysis depends on H363, which acts as the Proton acceptor. 2 residues coordinate UDP-N-acetyl-alpha-D-glucosamine: Y366 and N377. Acetyl-CoA is bound by residues A380, 386 to 387 (NY), S405, A423, and R440.

It in the N-terminal section; belongs to the N-acetylglucosamine-1-phosphate uridyltransferase family. In the C-terminal section; belongs to the transferase hexapeptide repeat family. As to quaternary structure, homotrimer. Mg(2+) is required as a cofactor.

The protein resides in the cytoplasm. It carries out the reaction alpha-D-glucosamine 1-phosphate + acetyl-CoA = N-acetyl-alpha-D-glucosamine 1-phosphate + CoA + H(+). It catalyses the reaction N-acetyl-alpha-D-glucosamine 1-phosphate + UTP + H(+) = UDP-N-acetyl-alpha-D-glucosamine + diphosphate. The protein operates within nucleotide-sugar biosynthesis; UDP-N-acetyl-alpha-D-glucosamine biosynthesis; N-acetyl-alpha-D-glucosamine 1-phosphate from alpha-D-glucosamine 6-phosphate (route II): step 2/2. It participates in nucleotide-sugar biosynthesis; UDP-N-acetyl-alpha-D-glucosamine biosynthesis; UDP-N-acetyl-alpha-D-glucosamine from N-acetyl-alpha-D-glucosamine 1-phosphate: step 1/1. Its pathway is bacterial outer membrane biogenesis; LPS lipid A biosynthesis. Its function is as follows. Catalyzes the last two sequential reactions in the de novo biosynthetic pathway for UDP-N-acetylglucosamine (UDP-GlcNAc). The C-terminal domain catalyzes the transfer of acetyl group from acetyl coenzyme A to glucosamine-1-phosphate (GlcN-1-P) to produce N-acetylglucosamine-1-phosphate (GlcNAc-1-P), which is converted into UDP-GlcNAc by the transfer of uridine 5-monophosphate (from uridine 5-triphosphate), a reaction catalyzed by the N-terminal domain. The sequence is that of Bifunctional protein GlmU from Escherichia coli O139:H28 (strain E24377A / ETEC).